The following is a 131-amino-acid chain: Fumarate reductase subunit C (131 aa).

Helical transmembrane passes span 30–50 (EGTA…LFAL), 57–77 (WAGF…LITL), and 109–129 (IIKS…FVAL).

This sequence belongs to the FrdC family. Part of an enzyme complex containing four subunits: a flavoprotein (FrdA), an iron-sulfur protein (FrdB), and two hydrophobic anchor proteins (FrdC and FrdD).

The protein resides in the cell inner membrane. Two distinct, membrane-bound, FAD-containing enzymes are responsible for the catalysis of fumarate and succinate interconversion; fumarate reductase is used in anaerobic growth, and succinate dehydrogenase is used in aerobic growth. Anchors the catalytic components of the fumarate reductase complex to the cell inner membrane, binds quinones. This Shigella flexneri protein is Fumarate reductase subunit C.